The chain runs to 235 residues: MTELARLKFYATQPHTCSYLPEEQATTLFLDPSQPMDVQVYADLSDMGFRRSGDHLYRPHCQNCSACVPARIPVNLFVPDRQQKRILKRNADVQVQSARPAFTEEYFDLYQRYIEQRHADGDMFPPSREQFSTFLVRDLPFSRFYEFRVDQRLLAVAVTDLLPNGLSAVYTFYEPDEERRSLGRYAILWQIAEAARLQLQAVYLGYWIKNCKKMNYKTQYRPIELLTNQRWVTLY.

It belongs to the R-transferase family. Bpt subfamily.

The protein localises to the cytoplasm. The enzyme catalyses N-terminal L-glutamyl-[protein] + L-leucyl-tRNA(Leu) = N-terminal L-leucyl-L-glutamyl-[protein] + tRNA(Leu) + H(+). It carries out the reaction N-terminal L-aspartyl-[protein] + L-leucyl-tRNA(Leu) = N-terminal L-leucyl-L-aspartyl-[protein] + tRNA(Leu) + H(+). Functions in the N-end rule pathway of protein degradation where it conjugates Leu from its aminoacyl-tRNA to the N-termini of proteins containing an N-terminal aspartate or glutamate. This is Aspartate/glutamate leucyltransferase from Pseudomonas savastanoi pv. phaseolicola (strain 1448A / Race 6) (Pseudomonas syringae pv. phaseolicola (strain 1448A / Race 6)).